The following is a 371-amino-acid chain: Deoxyuridine 5'-triphosphate nucleotidohydrolase (371 aa).

Substrate is bound by residues 260–262 (RSS) and 366–367 (FG). A disordered region spans residues 350 to 371 (NEFDAEAPPSERGTGGFGSTGI). The span at 362–371 (GTGGFGSTGI) shows a compositional bias: gly residues.

Belongs to the dUTPase family. The cofactor is Mg(2+).

The catalysed reaction is dUTP + H2O = dUMP + diphosphate + H(+). Functionally, involved in nucleotide metabolism: produces dUMP, the immediate precursor of thymidine nucleotides and decreases the intracellular concentration of dUTP to avoid uracil incorporation into viral DNA. In Homo sapiens (Human), this protein is Deoxyuridine 5'-triphosphate nucleotidohydrolase.